The following is a 192-amino-acid chain: Thymidine kinase (192 aa).

ATP is bound by residues 9-16 (SSMNAGKS) and 87-90 (DEAQ). Glutamate 88 acts as the Proton acceptor in catalysis. Zn(2+)-binding residues include cysteine 145, cysteine 147, cysteine 182, and histidine 185.

It belongs to the thymidine kinase family. Homotetramer.

It is found in the cytoplasm. It carries out the reaction thymidine + ATP = dTMP + ADP + H(+). The protein is Thymidine kinase of Colwellia psychrerythraea (strain 34H / ATCC BAA-681) (Vibrio psychroerythus).